The chain runs to 135 residues: Large ribosomal subunit protein uL16c (135 aa).

The protein belongs to the universal ribosomal protein uL16 family. In terms of assembly, part of the 50S ribosomal subunit.

Its subcellular location is the plastid. It is found in the chloroplast. This chain is Large ribosomal subunit protein uL16c, found in Ceratophyllum demersum (Rigid hornwort).